The chain runs to 862 residues: MLSIAHKIFGSTNSRIIKSFHKVVQDINAIEHEIQLLSNEALKHKTIEFKEELKNGKTLDDILVPAFAVVREASKRVLNMRHFDVQLIGGIVLHKGMISEMKTGEGKTLVATLAAYLNALEGKGVHIVTVNDYLAKRDAEWMGELYSALGITVGCILTETNDLERKNAYNCDILYSTNNNLGFDYLRDNMKFSRDEMVQRGFNYAIVDEVDSILIDEARTPLIISGQVDQDIKMYKKIDNLIYELAEEDYELEEKNRNIFLTEAGITKIENLLIQHNLISSNTSLYDIDNIIIMHYITQALRAHKMFAVDKDYIIKDGNIVIIDEFTGRMMDGRRYSDGLHQALEAKEKLNINSENQTLASTTFQNYFRMYTKLSGMTGTAETESEEFLGIYNLQVVQIPTNIPVQRIDLNDDIYCTEEEKFNSVIKFISECHKKLQPVLVGTVSIEKSEMLSKLLTKNKLKHSVLNARYHEQEAYIIAQAGIPGTITIATNMAGRGTDIQLGGNLKMLAKTALANITDKEAIEIKYKQLTEKVNRDKEIAIQAGGLCVIGTERHESRRIDNQLRGRSGRQGDPGLSKFFLSLEDDLLRIFGSDKIKGVLQKLGMKKDEAIQHTWISRSIEKAQHKVESRNYDIRKSLLKFDNVINEQRKVVFDQRNKILDSDSYDISIIYRDLNSDIVNSIIHDKYYNLDDDTYKALSSEFTRIYNITLDYSTISNFESKDKVLEHLNETVDEHFAQKIEEFTLKDQKAWDHVVKKVMIMSLDYLWRDHLAALDSLKCGINLRSIAQKDPLNEFKAEAFSMLENMMSKFYELIIQRLSHLKFDIELNDTQRIEYNIHHSKISRNEKCPCGSGKKFKHCHGA.

ATP is bound by residues Gln86, 104 to 108 (GEGKT), and Asp499. Residues Cys848, Cys850, Cys859, and His860 each contribute to the Zn(2+) site.

It belongs to the SecA family. Monomer and homodimer. Part of the essential Sec protein translocation apparatus which comprises SecA, SecYEG and auxiliary proteins SecDF-YajC and YidC. Requires Zn(2+) as cofactor.

Its subcellular location is the cell inner membrane. The protein resides in the cytoplasm. It catalyses the reaction ATP + H2O + cellular proteinSide 1 = ADP + phosphate + cellular proteinSide 2.. In terms of biological role, part of the Sec protein translocase complex. Interacts with the SecYEG preprotein conducting channel. Has a central role in coupling the hydrolysis of ATP to the transfer of proteins into and across the cell membrane, serving both as a receptor for the preprotein-SecB complex and as an ATP-driven molecular motor driving the stepwise translocation of polypeptide chains across the membrane. In Ehrlichia chaffeensis (strain ATCC CRL-10679 / Arkansas), this protein is Protein translocase subunit SecA.